The sequence spans 558 residues: Ankyrin repeat protein OPG189 (558 aa).

7 ANK repeats span residues 65-95 (YGENILHIYSMDDANTNIIIFFLDNVLNINK), 169-205 (YGCTLLHRCIYHYKKSESESYNELIKILLNNGSDVDK), 209-239 (HGNTPFILLCKHDIDNVELFEICLENANIDS), 243-272 (NGYTPLHYVSCRNKYDFVKSLISKGANVNT), 276-304 (FGTTPFYCGIIHGISLIKLYLESDTELEI), 339-368 (YNETSIYDAVSYNAYNMLVYLLNRNGDFET), and 372-401 (SGCTCISKAVANNNKIIMEVLLSKQPSLKI).

This sequence belongs to the orthopoxvirus OPG189 protein family.

Functionally, contributes to viral release without involving rearrangement of host actin. This chain is Ankyrin repeat protein OPG189 (OPG189), found in Homo sapiens (Human).